Here is a 238-residue protein sequence, read N- to C-terminus: Beta-glucanase (238 aa).

The N-terminal stretch at 1-26 is a signal peptide; sequence MMKKKSWFTLMITGVISLFFSVSAFA. One can recognise a GH16 domain in the interval 29-238; sequence VFWEPLSYFN…EYDWVKYTSN (210 aa). A disulfide bridge connects residues C56 and C85. The Nucleophile role is filled by E129. E133 (proton donor) is an active-site residue.

Belongs to the glycosyl hydrolase 16 family.

The catalysed reaction is Hydrolysis of (1-&gt;4)-beta-D-glucosidic linkages in beta-D-glucans containing (1-&gt;3)- and (1-&gt;4)-bonds.. In Paenibacillus polymyxa (Bacillus polymyxa), this protein is Beta-glucanase (gluB).